The primary structure comprises 247 residues: DNA polymerase sliding clamp (247 aa).

This sequence belongs to the PCNA family. In terms of assembly, homotrimer. The subunits circularize to form a toroid; DNA passes through its center. Replication factor C (RFC) is required to load the toroid on the DNA.

In terms of biological role, sliding clamp subunit that acts as a moving platform for DNA processing. Responsible for tethering the catalytic subunit of DNA polymerase and other proteins to DNA during high-speed replication. This Natronomonas pharaonis (strain ATCC 35678 / DSM 2160 / CIP 103997 / JCM 8858 / NBRC 14720 / NCIMB 2260 / Gabara) (Halobacterium pharaonis) protein is DNA polymerase sliding clamp.